We begin with the raw amino-acid sequence, 180 residues long: MFHATTILAYKGKNKSVIGGDGQVSFGNTVLKGNAVKIRKLNNGKVLAGFAGSTADAFNLFDMFENLLQSSKGDLLKAAIDFSKEWRKDKYLRKLEAMMLVLDRNHIFLLSGTGDVVEPEDGQIAAIGSGGNYALSAARALAKHTDLDEEELVKSSLQIAGEICIYTNTNIKTYVIEDEK.

The active site involves Thr-5. The Na(+) site is built by Gly-161, Cys-164, and Thr-167.

It belongs to the peptidase T1B family. HslV subfamily. In terms of assembly, a double ring-shaped homohexamer of HslV is capped on each side by a ring-shaped HslU homohexamer. The assembly of the HslU/HslV complex is dependent on binding of ATP.

Its subcellular location is the cytoplasm. The catalysed reaction is ATP-dependent cleavage of peptide bonds with broad specificity.. Its activity is regulated as follows. Allosterically activated by HslU binding. In terms of biological role, protease subunit of a proteasome-like degradation complex believed to be a general protein degrading machinery. The protein is ATP-dependent protease subunit HslV of Campylobacter jejuni subsp. jejuni serotype O:2 (strain ATCC 700819 / NCTC 11168).